The following is a 167-amino-acid chain: Fluoride-specific ion channel FluC (167 aa).

Helical transmembrane passes span 32–52 (HVTP…GALA), 69–89 (IGTL…IAYV), 102–122 (FMIT…AELF), and 137–157 (LGLH…TIGL). Na(+) is bound by residues Gly109 and Ser112.

This sequence belongs to the fluoride channel Fluc/FEX (TC 1.A.43) family.

The protein resides in the cell inner membrane. It catalyses the reaction fluoride(in) = fluoride(out). Na(+) is not transported, but it plays an essential structural role and its presence is essential for fluoride channel function. In terms of biological role, fluoride-specific ion channel. Important for reducing fluoride concentration in the cell, thus reducing its toxicity. The sequence is that of Fluoride-specific ion channel FluC from Xanthomonas oryzae pv. oryzae (strain KACC10331 / KXO85).